We begin with the raw amino-acid sequence, 361 residues long: Phosphoserine aminotransferase (361 aa).

Residue arginine 42 coordinates L-glutamate. Pyridoxal 5'-phosphate-binding positions include 76 to 77 (AR), tryptophan 102, threonine 153, aspartate 173, and glutamine 196. Lysine 197 carries the N6-(pyridoxal phosphate)lysine modification. Residue 238 to 239 (NT) coordinates pyridoxal 5'-phosphate.

This sequence belongs to the class-V pyridoxal-phosphate-dependent aminotransferase family. SerC subfamily. As to quaternary structure, homodimer. Requires pyridoxal 5'-phosphate as cofactor.

The protein resides in the cytoplasm. It catalyses the reaction O-phospho-L-serine + 2-oxoglutarate = 3-phosphooxypyruvate + L-glutamate. The catalysed reaction is 4-(phosphooxy)-L-threonine + 2-oxoglutarate = (R)-3-hydroxy-2-oxo-4-phosphooxybutanoate + L-glutamate. It participates in amino-acid biosynthesis; L-serine biosynthesis; L-serine from 3-phospho-D-glycerate: step 2/3. The protein operates within cofactor biosynthesis; pyridoxine 5'-phosphate biosynthesis; pyridoxine 5'-phosphate from D-erythrose 4-phosphate: step 3/5. Catalyzes the reversible conversion of 3-phosphohydroxypyruvate to phosphoserine and of 3-hydroxy-2-oxo-4-phosphonooxybutanoate to phosphohydroxythreonine. This Yersinia pseudotuberculosis serotype IB (strain PB1/+) protein is Phosphoserine aminotransferase.